Here is a 227-residue protein sequence, read N- to C-terminus: MKFAVIQFPGSNCDLDMLHAIRDSIGEEAEYVWHAETSLAGFDAVLLPGGFSYGDYLRTGAIAKFSSIMPEVLRFAEMGKPVLGVCNGFQILTEIGLLPGALIRNNNLHFICKTVPLRVANASTMFTELYEEGEIIQVPVAHGEGNYYCDDETLLKLKENNQIVFTYDSVNPNGSRADIAGIVNERGNVLGMMPHPERAVEEIIGGTDGLRLFESVVKAWKEEQVNA.

Residues 2–226 enclose the Glutamine amidotransferase type-1 domain; the sequence is KFAVIQFPGS…VKAWKEEQVN (225 aa). The active-site Nucleophile is the cysteine 86. Active-site residues include histidine 195 and glutamate 197.

Part of the FGAM synthase complex composed of 1 PurL, 1 PurQ and 2 PurS subunits.

It localises to the cytoplasm. It catalyses the reaction N(2)-formyl-N(1)-(5-phospho-beta-D-ribosyl)glycinamide + L-glutamine + ATP + H2O = 2-formamido-N(1)-(5-O-phospho-beta-D-ribosyl)acetamidine + L-glutamate + ADP + phosphate + H(+). The enzyme catalyses L-glutamine + H2O = L-glutamate + NH4(+). The protein operates within purine metabolism; IMP biosynthesis via de novo pathway; 5-amino-1-(5-phospho-D-ribosyl)imidazole from N(2)-formyl-N(1)-(5-phospho-D-ribosyl)glycinamide: step 1/2. Functionally, part of the phosphoribosylformylglycinamidine synthase complex involved in the purines biosynthetic pathway. Catalyzes the ATP-dependent conversion of formylglycinamide ribonucleotide (FGAR) and glutamine to yield formylglycinamidine ribonucleotide (FGAM) and glutamate. The FGAM synthase complex is composed of three subunits. PurQ produces an ammonia molecule by converting glutamine to glutamate. PurL transfers the ammonia molecule to FGAR to form FGAM in an ATP-dependent manner. PurS interacts with PurQ and PurL and is thought to assist in the transfer of the ammonia molecule from PurQ to PurL. The protein is Phosphoribosylformylglycinamidine synthase subunit PurQ of Listeria monocytogenes serotype 4a (strain HCC23).